A 159-amino-acid polypeptide reads, in one-letter code: Phosphopantetheine adenylyltransferase (159 aa).

A substrate-binding site is contributed by Thr-10. Residues 10-11 (TF) and His-18 each bind ATP. Positions 42, 74, and 88 each coordinate substrate. ATP-binding positions include 89 to 91 (GLR), Glu-99, and 124 to 130 (WSFISSS).

Belongs to the bacterial CoaD family. In terms of assembly, homohexamer. Mg(2+) serves as cofactor.

The protein resides in the cytoplasm. It catalyses the reaction (R)-4'-phosphopantetheine + ATP + H(+) = 3'-dephospho-CoA + diphosphate. The protein operates within cofactor biosynthesis; coenzyme A biosynthesis; CoA from (R)-pantothenate: step 4/5. Functionally, reversibly transfers an adenylyl group from ATP to 4'-phosphopantetheine, yielding dephospho-CoA (dPCoA) and pyrophosphate. The protein is Phosphopantetheine adenylyltransferase of Pectobacterium carotovorum subsp. carotovorum (strain PC1).